The sequence spans 132 residues: Small ribosomal subunit protein uS8c (132 aa).

It belongs to the universal ribosomal protein uS8 family. Part of the 30S ribosomal subunit.

Its subcellular location is the plastid. It localises to the chloroplast. One of the primary rRNA binding proteins, it binds directly to 16S rRNA central domain where it helps coordinate assembly of the platform of the 30S subunit. This chain is Small ribosomal subunit protein uS8c (rps8), found in Amborella trichopoda.